The following is a 440-amino-acid chain: uncharacterized protein (440 aa).

The signal sequence occupies residues 1-19 (MKKLLLAASIVYFASACLA).

This is an uncharacterized protein from Rickettsia prowazekii (strain Madrid E).